Consider the following 296-residue polypeptide: Nucleotide-binding protein str0831 (296 aa).

Residue 13 to 20 (GMSGAGKT) coordinates ATP. 63–66 (DMRS) contributes to the GTP binding site.

This sequence belongs to the RapZ-like family.

Functionally, displays ATPase and GTPase activities. The chain is Nucleotide-binding protein str0831 from Streptococcus thermophilus (strain CNRZ 1066).